We begin with the raw amino-acid sequence, 354 residues long: UDP-3-O-acylglucosamine N-acyltransferase (354 aa).

Residue H247 is the Proton acceptor of the active site.

The protein belongs to the transferase hexapeptide repeat family. LpxD subfamily. Homotrimer.

It carries out the reaction a UDP-3-O-[(3R)-3-hydroxyacyl]-alpha-D-glucosamine + a (3R)-hydroxyacyl-[ACP] = a UDP-2-N,3-O-bis[(3R)-3-hydroxyacyl]-alpha-D-glucosamine + holo-[ACP] + H(+). The protein operates within bacterial outer membrane biogenesis; LPS lipid A biosynthesis. Its function is as follows. Catalyzes the N-acylation of UDP-3-O-acylglucosamine using 3-hydroxyacyl-ACP as the acyl donor. Is involved in the biosynthesis of lipid A, a phosphorylated glycolipid that anchors the lipopolysaccharide to the outer membrane of the cell. The chain is UDP-3-O-acylglucosamine N-acyltransferase from Chlamydia trachomatis serovar L2b (strain UCH-1/proctitis).